The sequence spans 211 residues: FMN-dependent NADH:quinone oxidoreductase (211 aa).

FMN-binding positions include 17-19, 102-105, and 146-149; these read SNS, MWNL, and SRGG.

Belongs to the azoreductase type 1 family. Homodimer. The cofactor is FMN.

The enzyme catalyses 2 a quinone + NADH + H(+) = 2 a 1,4-benzosemiquinone + NAD(+). The catalysed reaction is N,N-dimethyl-1,4-phenylenediamine + anthranilate + 2 NAD(+) = 2-(4-dimethylaminophenyl)diazenylbenzoate + 2 NADH + 2 H(+). Quinone reductase that provides resistance to thiol-specific stress caused by electrophilic quinones. Its function is as follows. Also exhibits azoreductase activity. Catalyzes the reductive cleavage of the azo bond in aromatic azo compounds to the corresponding amines. The sequence is that of FMN-dependent NADH:quinone oxidoreductase from Macrococcus caseolyticus (strain JCSC5402) (Macrococcoides caseolyticum).